Here is a 319-residue protein sequence, read N- to C-terminus: tRNA uridine(34) hydroxylase (319 aa).

The Rhodanese domain maps to 127–221; the sequence is KQEDTVIIDA…YGKDPEVQGE (95 aa). Residue Cys-181 is the Cysteine persulfide intermediate of the active site.

Belongs to the TrhO family.

The enzyme catalyses uridine(34) in tRNA + AH2 + O2 = 5-hydroxyuridine(34) in tRNA + A + H2O. In terms of biological role, catalyzes oxygen-dependent 5-hydroxyuridine (ho5U) modification at position 34 in tRNAs. In Bacillus anthracis (strain A0248), this protein is tRNA uridine(34) hydroxylase.